A 291-amino-acid chain; its full sequence is Shikimate dehydrogenase (NADP(+)) (291 aa).

Residues 22-24 and T69 each bind shikimate; that span reads SLS. Catalysis depends on K73, which acts as the Proton acceptor. 2 residues coordinate shikimate: N94 and D110. Residues 131–135 and L226 contribute to the NADP(+) site; that span reads GSGGA. Y228 provides a ligand contact to shikimate. G249 serves as a coordination point for NADP(+).

The protein belongs to the shikimate dehydrogenase family. As to quaternary structure, homodimer.

The enzyme catalyses shikimate + NADP(+) = 3-dehydroshikimate + NADPH + H(+). It functions in the pathway metabolic intermediate biosynthesis; chorismate biosynthesis; chorismate from D-erythrose 4-phosphate and phosphoenolpyruvate: step 4/7. Functionally, involved in the biosynthesis of the chorismate, which leads to the biosynthesis of aromatic amino acids. Catalyzes the reversible NADPH linked reduction of 3-dehydroshikimate (DHSA) to yield shikimate (SA). The chain is Shikimate dehydrogenase (NADP(+)) from Synechococcus sp. (strain JA-3-3Ab) (Cyanobacteria bacterium Yellowstone A-Prime).